Here is a 1608-residue protein sequence, read N- to C-terminus: DNA-directed RNA polymerase III subunit rpc2 (1608 aa).

Residues C1557, C1560, C1569, and C1572 each coordinate Zn(2+). Residues 1557–1572 (CKNCGFLGYEGYCQYC) form a C4-type zinc finger.

It belongs to the RNA polymerase beta chain family. As to quaternary structure, component of the RNA polymerase III (Pol III) complex. This protein undergoes a protein self splicing that involves a post-translational excision of the intervening region (intein) followed by peptide ligation.

The protein localises to the nucleus. The catalysed reaction is RNA(n) + a ribonucleoside 5'-triphosphate = RNA(n+1) + diphosphate. DNA-dependent RNA polymerase catalyzes the transcription of DNA into RNA using the four ribonucleoside triphosphates as substrates. Second largest core component of RNA polymerase III which synthesizes small RNAs, such as 5S rRNA and tRNAs. Proposed to contribute to the polymerase catalytic activity and forms the polymerase active center together with the largest subunit. Pol III is composed of mobile elements and rpc2 is part of the core element with the central large cleft and probably a clamp element that moves to open and close the cleft. In Dictyostelium discoideum (Social amoeba), this protein is DNA-directed RNA polymerase III subunit rpc2 (polr3b).